The primary structure comprises 667 residues: WD repeat-containing protein 48 homolog (667 aa).

WD repeat units lie at residues 26-65, 71-110, 113-152, 164-203, 206-245, 248-287, 290-329, and 349-388; these read QHRN…NDKY, HHND…CMST, THRD…ALTA, GSKD…RSMK, GHTE…CIQT, VHKE…NKML, EEKA…RCTL, and KGGA…KKEE. The tract at residues 591–615 is disordered; the sequence is ETTPSGGNANNSLQNSQSDANSEGS.

It belongs to the WD repeat WDR48 family. Catalytic component of the Usp12-46 deubiquitylase complex consisting of Usp12-46, Wdr20 and Uaf1; regulatory subunit that, together wtih Wdr20, stabilizes Usp12-46. The Usp12-46 deubiquitylase complex associates with arr/arrow; the interaction leads to deubiquitination and stabilization of arr/arrow.

Regulatory component of the Usp12-46 deubiquitylase complex. activates deubiquitination by increasing the catalytic turnover without increasing the affinity of deubiquitinating enzymes for the substrate. The complex deubiquitylates the wg/wingless-signaling receptor arr/arrow, which stabilizes the receptor and increases its concentration at the cell surface; this enhances the sensitivity of cells to wg/wingless-signal stimulation. This increases the amplitude and spatial range of the signaling response to the wg/wingless morphogen gradient, facilitating the precise concentration-dependent regulation of its target genes. Together with Wdr20 and Usp12-46 required for wg/wingless-mediated signaling in the wing imaginal disc and for wg/wingless-dependent regulation of intestinal stem cell proliferation. The sequence is that of WD repeat-containing protein 48 homolog from Drosophila virilis (Fruit fly).